Reading from the N-terminus, the 208-residue chain is Rac-like GTP-binding protein ARAC8 (208 aa).

15–22 (GDGAVGKT) contributes to the GTP binding site. The Effector region signature appears at 37 to 45 (YIPTVFDNF). Residues 62–66 (DTAGQ) and 120–123 (TKMD) each bind GTP. 2 S-palmitoyl cysteine lipidation sites follow: Cys-199 and Cys-205.

This sequence belongs to the small GTPase superfamily. Rho family. Interacts with ICR1. Binds to SPK1. Post-translationally, although this sequence has a C-terminal -CXXX, it is palmitoylated at Cys-205, rather than prenylated.

It localises to the membrane. Acts as a negative regulator of abscisic acid (ABA) responses. The polypeptide is Rac-like GTP-binding protein ARAC8 (ARAC8) (Arabidopsis thaliana (Mouse-ear cress)).